Here is a 229-residue protein sequence, read N- to C-terminus: Deoxyribose-phosphate aldolase (229 aa).

Asp-96 serves as the catalytic Proton donor/acceptor. Lys-166 functions as the Schiff-base intermediate with acetaldehyde in the catalytic mechanism. Residue Lys-195 is the Proton donor/acceptor of the active site.

Belongs to the DeoC/FbaB aldolase family. DeoC type 1 subfamily.

It is found in the cytoplasm. The enzyme catalyses 2-deoxy-D-ribose 5-phosphate = D-glyceraldehyde 3-phosphate + acetaldehyde. It functions in the pathway carbohydrate degradation; 2-deoxy-D-ribose 1-phosphate degradation; D-glyceraldehyde 3-phosphate and acetaldehyde from 2-deoxy-alpha-D-ribose 1-phosphate: step 2/2. Catalyzes a reversible aldol reaction between acetaldehyde and D-glyceraldehyde 3-phosphate to generate 2-deoxy-D-ribose 5-phosphate. The protein is Deoxyribose-phosphate aldolase of Micrococcus luteus (strain ATCC 4698 / DSM 20030 / JCM 1464 / CCM 169 / CCUG 5858 / IAM 1056 / NBRC 3333 / NCIMB 9278 / NCTC 2665 / VKM Ac-2230) (Micrococcus lysodeikticus).